Here is a 200-residue protein sequence, read N- to C-terminus: TATA-box-binding protein 1 (200 aa).

At T2 the chain carries N-acetylthreonine. Repeat copies occupy residues 25-101 and 115-192.

The protein belongs to the TBP family. In terms of assembly, belongs to the TFIID complex together with the TBP-associated factors (TAFs). Binds DNA as monomer. Interacts with TAF1 (via N-terminus). Interacts with MEE12/CCG1. Associates with PWP2 in the nucleus. Component of a nuclear protein complex containing at least TATA binding proteins (TBPs, e.g. TBP1 and TBP2) and ATX1.

It localises to the nucleus. Its function is as follows. General transcription factor that functions at the core of the DNA-binding multiprotein factor TFIID. Binding of TFIID to the TATA box is the initial transcriptional step of the pre-initiation complex (PIC), playing a role in the activation of eukaryotic genes transcribed by RNA polymerase II. The polypeptide is TATA-box-binding protein 1 (Arabidopsis thaliana (Mouse-ear cress)).